A 106-amino-acid polypeptide reads, in one-letter code: Iron-sulfur cluster assembly protein CyaY (106 aa).

It belongs to the frataxin family.

In terms of biological role, involved in iron-sulfur (Fe-S) cluster assembly. May act as a regulator of Fe-S biogenesis. This Escherichia fergusonii (strain ATCC 35469 / DSM 13698 / CCUG 18766 / IAM 14443 / JCM 21226 / LMG 7866 / NBRC 102419 / NCTC 12128 / CDC 0568-73) protein is Iron-sulfur cluster assembly protein CyaY.